Here is a 391-residue protein sequence, read N- to C-terminus: Tyrosinase-like protein phomQ2 (391 aa).

The interval 1-21 is disordered; the sequence is MDNVGCEASSSRDPKGKKAVG. A helical membrane pass occupies residues 61-81; it reads IRGFICATIIFVVCLGALSYI. 2 N-linked (GlcNAc...) asparagine glycosylation sites follow: asparagine 97 and asparagine 141. Histidine 160 and histidine 169 together coordinate Cu cation. 3 N-linked (GlcNAc...) asparagine glycosylation sites follow: asparagine 204, asparagine 246, and asparagine 261. Histidine 298 and histidine 324 together coordinate Cu cation. N-linked (GlcNAc...) asparagine glycosylation is present at asparagine 353.

Belongs to the tyrosinase family. Cu(2+) is required as a cofactor.

Its subcellular location is the membrane. It participates in mycotoxin biosynthesis. Tyrosinase-like protein; part of the gene cluster that mediates the biosynthesis of the phomopsins, a group of hexapeptide mycotoxins which infects lupins and causes lupinosis disease in livestock. Within the pathway, phomQ2 is involved in the generation of the common 13-membered macrocycle, possibly by catalyzing the hydroxylation of Tyr. The pathway starts with the processing of the precursor phomA by several endopeptidases including kexin proteases as well as the cluster-specific S41 family peptidase phomP1 and the oligopeptidase phomG to produce 10 identical copies of the hexapeptide Tyr-Val-Ile-Pro-Ile-Asp. After being excised from the precursor peptide, the core peptides are cyclized and modified post-translationally by enzymes encoded within the gene cluster. The timing and order of proteolysis of the phomA precursor and PTMs are still unknown. Two tyrosinase-like enzymes, phomQ1 and phomQ2, catalyze the chlorination and hydroxylation of Tyr, respectively. PhomYb, is proposed to be involved in the construction of the macrocyclic structure. The other 4 ustYa family proteins may be involved in PTMs that generate the unique structure of phomopsin A. PhomYa is required for the hydroxylation of C-beta of Tyr. PhomYc, phomYd, and phomYe are responsible for the biosynthesis of 2,3-dehydroisoleucine (dIle), 2,3-dehydroaspartic acid (dAsp), and 3,4-dehydroproline (dPro), respectively. While dIle formation by phomYc is indispensable for the installation of dAsp by phomYd, the order of the other PTMs have not been elucidated yet. Most of the biosynthetic enzymes likely have broad substrate specificity, and thus, there might be a metabolic grid from a precursor to phomopsin A. The enzyme(s) responsible for the biosynthesis of 3,4-dehydrovaline (dVal) have also not been identified yet. Finally, phomM acts as an S-adenosylmethionine-dependent alpha-N-methyltransferase that catalyzes two successive N-methylation reactions, converting N-desmethyl-phomopsin A to phomopsin A and phomopsin A further to an N,N-dimethylated congener called phomopsin E. The polypeptide is Tyrosinase-like protein phomQ2 (Diaporthe leptostromiformis (Lupinosis disease fungus)).